The following is a 143-amino-acid chain: MFLGEYRHTIDEKGRMIVPAKFREHLGTPFVITRGLDNCLFVYPQSEWDKLESQLKELPFTKKDARAFTRFFFSGASECELDKQGRMNVPQPLREYAKLEKECVVIGVSNRMEVWSKTLWEDYVSQSEDSFADIAENLIDFDL.

SpoVT-AbrB domains are found at residues 5–47 (EYRH…PQSE) and 76–119 (ASEC…SKTL).

It belongs to the MraZ family. Forms oligomers.

It localises to the cytoplasm. The protein localises to the nucleoid. In Shouchella clausii (strain KSM-K16) (Alkalihalobacillus clausii), this protein is Transcriptional regulator MraZ.